The chain runs to 454 residues: tRNA modification GTPase MnmE (454 aa).

Residues Arg-23, Glu-80, and Lys-120 each coordinate (6S)-5-formyl-5,6,7,8-tetrahydrofolate. In terms of domain architecture, TrmE-type G spans 216-377; that stretch reads GMKVVIAGRP…LRNNLKQSMG (162 aa). Position 226 (Asn-226) interacts with K(+). GTP contacts are provided by residues 226 to 231, 245 to 251, 270 to 273, 335 to 338, and 358 to 360; these read NAGKSS, TDIAGTT, DTAG, NKAD, and SAR. Residue Ser-230 participates in Mg(2+) binding. Residues Thr-245, Ile-247, and Thr-250 each coordinate K(+). Residue Thr-251 participates in Mg(2+) binding. Lys-454 lines the (6S)-5-formyl-5,6,7,8-tetrahydrofolate pocket.

It belongs to the TRAFAC class TrmE-Era-EngA-EngB-Septin-like GTPase superfamily. TrmE GTPase family. Homodimer. Heterotetramer of two MnmE and two MnmG subunits. It depends on K(+) as a cofactor.

The protein resides in the cytoplasm. Exhibits a very high intrinsic GTPase hydrolysis rate. Involved in the addition of a carboxymethylaminomethyl (cmnm) group at the wobble position (U34) of certain tRNAs, forming tRNA-cmnm(5)s(2)U34. The polypeptide is tRNA modification GTPase MnmE (Salmonella paratyphi A (strain ATCC 9150 / SARB42)).